Here is an 803-residue protein sequence, read N- to C-terminus: Volume-regulated anion channel subunit LRRC8B (803 aa).

Residues Met-1–Asp-25 are Cytoplasmic-facing. The chain crosses the membrane as a helical span at residues Val-26–Gln-46. At Leu-47–Lys-119 the chain is on the extracellular side. Disulfide bonds link Cys-55–Cys-304 and Cys-109–Cys-289. N-linked (GlcNAc...) asparagine glycosylation is present at Asn-78. The helical transmembrane segment at Phe-120 to Leu-140 threads the bilayer. Residues His-141 to Gln-261 lie on the Cytoplasmic side of the membrane. 2 positions are modified to phosphoserine: Ser-186 and Ser-196. Residues Ile-262–Tyr-282 form a helical membrane-spanning segment. Residues Ile-283–Ser-307 are Extracellular-facing. Residues Leu-308 to Leu-328 traverse the membrane as a helical segment. The Cytoplasmic portion of the chain corresponds to Thr-329–Cys-803. 15 LRR repeats span residues Val-415–Leu-439, Thr-440–Leu-462, Asn-464–Glu-486, Asn-488–Leu-509, Asn-511–Glu-532, Asn-539–Leu-559, Ser-562–Lys-582, Asn-586–Leu-607, Asn-609–Gln-630, Ser-634–Leu-655, Asn-657–Cys-678, Lys-680–Leu-701, Asn-703–Cys-724, Lys-726–Leu-747, and Asn-749–Gln-771.

The protein belongs to the LRRC8 family. As to quaternary structure, heterohexamer; oligomerizes with other LRRC8 proteins (LRRC8A, LRRC8C, LRRC8D and/or LRRC8E) to form a heterohexamer. In vivo, the subunit composition may depend primarily on expression levels, and heterooligomeric channels containing various proportions of the different LRRC8 proteins may coexist.

It localises to the cell membrane. The protein localises to the endoplasmic reticulum membrane. The catalysed reaction is chloride(in) = chloride(out). It catalyses the reaction iodide(out) = iodide(in). The enzyme catalyses taurine(out) = taurine(in). Its function is as follows. Non-essential component of the volume-regulated anion channel (VRAC, also named VSOAC channel), an anion channel required to maintain a constant cell volume in response to extracellular or intracellular osmotic changes. The VRAC channel conducts iodide better than chloride and can also conduct organic osmolytes like taurine. Channel activity requires LRRC8A plus at least one other family member (LRRC8B, LRRC8C, LRRC8D or LRRC8E); channel characteristics depend on the precise subunit composition. This chain is Volume-regulated anion channel subunit LRRC8B, found in Mus musculus (Mouse).